The following is a 168-amino-acid chain: uncharacterized protein (168 aa).

3 disordered regions span residues 1 to 35 (MGSS…KKLD), 48 to 97 (KVKK…DKGN), and 126 to 168 (ASIT…GLGM). Positions 29-95 (KEKKKLDEKE…KNSLSRSQDK (67 aa)) form a coiled coil. Basic and acidic residues predominate over residues 68–85 (LAEDPMVKNVAENDHDQM). Over residues 126–139 (ASITESSPSAQSNK) the composition is skewed to polar residues. A compositionally biased stretch (basic and acidic residues) spans 140-150 (TNDKQREKELE). Positions 157 to 168 (VLHKGTKKGLGM) are enriched in basic residues.

This is an uncharacterized protein from Schizosaccharomyces pombe (strain 972 / ATCC 24843) (Fission yeast).